The sequence spans 630 residues: Mannosyl-oligosaccharide 1,2-alpha-mannosidase IC (630 aa).

The Cytoplasmic segment spans residues 1 to 22 (MLMRKVPGFVPASPWGLRLPQK). A helical; Signal-anchor for type II membrane protein membrane pass occupies residues 23 to 43 (FLFLLFLSGLVTLCFGALFLL). Residues 44-630 (PHSSRLKRLF…DSSGRAWGRH (587 aa)) lie on the Lumenal side of the membrane. The segment at 74–140 (PAREQEPPPN…ASRPGDEGVP (67 aa)) is disordered. Residues 80-89 (PPPNPAPAAP) show a composition bias toward pro residues. The segment covering 102-113 (PRRRKGGLRRTR) has biased composition (basic residues). S164 is subject to Phosphoserine. N250 is a glycosylation site (N-linked (GlcNAc...) asparagine). C453 and C485 are disulfide-bonded. E499 serves as the catalytic Proton donor. Residue T610 coordinates Ca(2+). N618 is a glycosylation site (N-linked (GlcNAc...) asparagine).

It belongs to the glycosyl hydrolase 47 family. It depends on Ca(2+) as a cofactor. In terms of tissue distribution, expressed in most tissues with the exception of lung, muscle and pancreas. Highly expressed in placenta.

It localises to the golgi apparatus membrane. The enzyme catalyses N(4)-(alpha-D-Man-(1-&gt;2)-alpha-D-Man-(1-&gt;2)-alpha-D-Man-(1-&gt;3)-[alpha-D-Man-(1-&gt;2)-alpha-D-Man-(1-&gt;3)-[alpha-D-Man-(1-&gt;2)-alpha-D-Man-(1-&gt;6)]-alpha-D-Man-(1-&gt;6)]-beta-D-Man-(1-&gt;4)-beta-D-GlcNAc-(1-&gt;4)-beta-D-GlcNAc)-L-asparaginyl-[protein] (N-glucan mannose isomer 9A1,2,3B1,2,3) + 4 H2O = N(4)-(alpha-D-Man-(1-&gt;3)-[alpha-D-Man-(1-&gt;3)-[alpha-D-Man-(1-&gt;6)]-alpha-D-Man-(1-&gt;6)]-beta-D-Man-(1-&gt;4)-beta-D-GlcNAc-(1-&gt;4)-beta-D-GlcNAc)-L-asparaginyl-[protein] (N-glucan mannose isomer 5A1,2) + 4 beta-D-mannose. The catalysed reaction is N(4)-(alpha-D-Man-(1-&gt;2)-alpha-D-Man-(1-&gt;2)-alpha-D-Man-(1-&gt;3)-[alpha-D-Man-(1-&gt;3)-[alpha-D-Man-(1-&gt;2)-alpha-D-Man-(1-&gt;6)]-alpha-D-Man-(1-&gt;6)]-beta-D-Man-(1-&gt;4)-beta-D-GlcNAc-(1-&gt;4)-beta-D-GlcNAc)-L-asparaginyl-[protein] (N-glucan mannose isomer 8A1,2,3B1,3) + 3 H2O = N(4)-(alpha-D-Man-(1-&gt;3)-[alpha-D-Man-(1-&gt;3)-[alpha-D-Man-(1-&gt;6)]-alpha-D-Man-(1-&gt;6)]-beta-D-Man-(1-&gt;4)-beta-D-GlcNAc-(1-&gt;4)-beta-D-GlcNAc)-L-asparaginyl-[protein] (N-glucan mannose isomer 5A1,2) + 3 beta-D-mannose. Its pathway is protein modification; protein glycosylation. Inhibited by both 1-deoxymannojirimycin and kifunensine. Involved in the maturation of Asn-linked oligosaccharides. Trim alpha-1,2-linked mannose residues from Man(9)GlcNAc(2) to produce first Man(8)GlcNAc(2) then Man(6)GlcNAc and a small amount of Man(5)GlcNAc. The chain is Mannosyl-oligosaccharide 1,2-alpha-mannosidase IC (MAN1C1) from Homo sapiens (Human).